The sequence spans 154 residues: 6,7-dimethyl-8-ribityllumazine synthase (154 aa).

Residues Trp-22, 56-58, and 80-82 contribute to the 5-amino-6-(D-ribitylamino)uracil site; these read AWE and CVV. Residue 85 to 86 participates in (2S)-2-hydroxy-3-oxobutyl phosphate binding; the sequence is DT. His-88 (proton donor) is an active-site residue. Residue Asn-113 participates in 5-amino-6-(D-ribitylamino)uracil binding. A (2S)-2-hydroxy-3-oxobutyl phosphate-binding site is contributed by Arg-127.

It belongs to the DMRL synthase family. As to quaternary structure, forms an icosahedral capsid composed of 60 subunits, arranged as a dodecamer of pentamers.

The catalysed reaction is (2S)-2-hydroxy-3-oxobutyl phosphate + 5-amino-6-(D-ribitylamino)uracil = 6,7-dimethyl-8-(1-D-ribityl)lumazine + phosphate + 2 H2O + H(+). Its pathway is cofactor biosynthesis; riboflavin biosynthesis; riboflavin from 2-hydroxy-3-oxobutyl phosphate and 5-amino-6-(D-ribitylamino)uracil: step 1/2. Functionally, catalyzes the formation of 6,7-dimethyl-8-ribityllumazine by condensation of 5-amino-6-(D-ribitylamino)uracil with 3,4-dihydroxy-2-butanone 4-phosphate. This is the penultimate step in the biosynthesis of riboflavin. The sequence is that of 6,7-dimethyl-8-ribityllumazine synthase from Xylella fastidiosa (strain 9a5c).